A 309-amino-acid chain; its full sequence is Homoserine kinase (309 aa).

An ATP-binding site is contributed by 91–101 (PIGSGLGSSAC).

This sequence belongs to the GHMP kinase family. Homoserine kinase subfamily.

It localises to the cytoplasm. The enzyme catalyses L-homoserine + ATP = O-phospho-L-homoserine + ADP + H(+). It functions in the pathway amino-acid biosynthesis; L-threonine biosynthesis; L-threonine from L-aspartate: step 4/5. Catalyzes the ATP-dependent phosphorylation of L-homoserine to L-homoserine phosphate. The protein is Homoserine kinase of Escherichia fergusonii (strain ATCC 35469 / DSM 13698 / CCUG 18766 / IAM 14443 / JCM 21226 / LMG 7866 / NBRC 102419 / NCTC 12128 / CDC 0568-73).